Here is an 85-residue protein sequence, read N- to C-terminus: UPF0297 protein LGAS_0422 (85 aa).

This sequence belongs to the UPF0297 family.

This Lactobacillus gasseri (strain ATCC 33323 / DSM 20243 / BCRC 14619 / CIP 102991 / JCM 1131 / KCTC 3163 / NCIMB 11718 / NCTC 13722 / AM63) protein is UPF0297 protein LGAS_0422.